The following is a 264-amino-acid chain: Proteasome subunit beta type-4 (264 aa).

Met-1 carries the N-acetylmethionine modification. The propeptide occupies 1–45 (MEAFLGSRSGLWAGGPAPGQFYRIPSTPDSFMDPASALYRGPITR). Ser-26 is modified (phosphoserine). At Tyr-102 the chain carries Phosphotyrosine.

It belongs to the peptidase T1B family. As to quaternary structure, the 26S proteasome consists of a 20S proteasome core and two 19S regulatory subunits. The 20S proteasome core is a barrel-shaped complex made of 28 subunits that are arranged in four stacked rings. The two outer rings are each formed by seven alpha subunits, and the two inner rings are formed by seven beta subunits. The proteolytic activity is exerted by three beta-subunits PSMB5, PSMB6 and PSMB7. Forms a ternary complex with SMAD1 and OAZ1 before PSMB4 is incorporated into the 20S proteasome. Interacts with PRPF19. (Microbial infection) Interacts with HTLV-1 Tax protein. In terms of assembly, (Microbial infection) Interacts with HIV-1 Nef and Tat proteins.

It localises to the cytoplasm. Its subcellular location is the nucleus. In terms of biological role, non-catalytic component of the 20S core proteasome complex involved in the proteolytic degradation of most intracellular proteins. This complex plays numerous essential roles within the cell by associating with different regulatory particles. Associated with two 19S regulatory particles, forms the 26S proteasome and thus participates in the ATP-dependent degradation of ubiquitinated proteins. The 26S proteasome plays a key role in the maintenance of protein homeostasis by removing misfolded or damaged proteins that could impair cellular functions, and by removing proteins whose functions are no longer required. Associated with the PA200 or PA28, the 20S proteasome mediates ubiquitin-independent protein degradation. This type of proteolysis is required in several pathways including spermatogenesis (20S-PA200 complex) or generation of a subset of MHC class I-presented antigenic peptides (20S-PA28 complex). SMAD1/OAZ1/PSMB4 complex mediates the degradation of the CREBBP/EP300 repressor SNIP1. The chain is Proteasome subunit beta type-4 from Homo sapiens (Human).